Here is a 541-residue protein sequence, read N- to C-terminus: Sorting nexin-27 (541 aa).

Positions 1–26 are disordered; sequence MADEDGEGIHPAAPHRNGGGGGGGGS. Residues 17-26 show a composition bias toward gly residues; that stretch reads NGGGGGGGGS. The PDZ domain maps to 43–136; sequence VVRIVKSESG…ELILTVLSVP (94 aa). 2 positions are modified to phosphoserine: Ser-51 and Ser-62. The 109-residue stretch at 161–269 folds into the PX domain; the sequence is QAVPISVPTY…EFLSESDENY (109 aa). Residues 273 to 362 form the Ras-associating domain; that stretch reads SDVELRVALP…TCLTIRKWLF (90 aa). Residues 273 to 362 are FERM-like region F1; that stretch reads SDVELRVALP…TCLTIRKWLF (90 aa). Residues 373–421 form an FERM-like region F2 region; it reads NDLAVTYFFHQAVDDVKKGYIKAEEKSYQLQKLYEQRKMVMYLNMLRTC. The interval 425–525 is FERM-like region F3; it reads NEIIFPHCAC…RVFCELKWRK (101 aa).

As to quaternary structure, core component of the SNX27-retromer, a multiprotein complex composed of SNX27, the WASH complex and the retromer complex. Interacts (via PDZ domain) with a number of target transmembrane proteins (via PDZ-binding motif): ABCC4, ADRB2, ARHGEF7, GRIA1, GRIA2, GRIN1, GRIN2A GRIN2C, KCNJ6, KCNJ9 and SLC2A1/GLUT1. Interacts (via the FERM-like regions) with the WASH complex. Interacts with SNX1. Interacts with CYTIP. Interacts with DGKZ. Interacts with MCC. Interacts (via PDZ domains) with SLC9A3; directs SLC9A3 membrane insertion from early endosomes to the plasma membrane.

It localises to the early endosome membrane. The protein resides in the cytoplasm. Its subcellular location is the cytosol. In terms of biological role, involved in the retrograde transport from endosome to plasma membrane, a trafficking pathway that promotes the recycling of internalized transmembrane proteins. Following internalization, endocytosed transmembrane proteins are delivered to early endosomes and recycled to the plasma membrane instead of being degraded in lysosomes. SNX27 specifically binds and directs sorting of a subset of transmembrane proteins containing a PDZ-binding motif at the C-terminus: following interaction with target transmembrane proteins, associates with the retromer complex, preventing entry into the lysosomal pathway, and promotes retromer-tubule based plasma membrane recycling. SNX27 also binds with the WASH complex. Interacts with membranes containing phosphatidylinositol-3-phosphate (PtdIns(3P)). May participate in establishment of natural killer cell polarity. Recruits CYTIP to early endosomes. The sequence is that of Sorting nexin-27 (SNX27) from Bos taurus (Bovine).